The sequence spans 366 residues: tRNA/tmRNA (uracil-C(5))-methyltransferase (366 aa).

5 residues coordinate S-adenosyl-L-methionine: glutamine 190, tyrosine 218, asparagine 223, glutamate 239, and aspartate 299. Residue cysteine 324 is the Nucleophile of the active site. Glutamate 358 acts as the Proton acceptor in catalysis.

Belongs to the class I-like SAM-binding methyltransferase superfamily. RNA M5U methyltransferase family. TrmA subfamily.

The catalysed reaction is uridine(54) in tRNA + S-adenosyl-L-methionine = 5-methyluridine(54) in tRNA + S-adenosyl-L-homocysteine + H(+). It catalyses the reaction uridine(341) in tmRNA + S-adenosyl-L-methionine = 5-methyluridine(341) in tmRNA + S-adenosyl-L-homocysteine + H(+). Functionally, dual-specificity methyltransferase that catalyzes the formation of 5-methyluridine at position 54 (m5U54) in all tRNAs, and that of position 341 (m5U341) in tmRNA (transfer-mRNA). This is tRNA/tmRNA (uracil-C(5))-methyltransferase from Salmonella paratyphi B (strain ATCC BAA-1250 / SPB7).